We begin with the raw amino-acid sequence, 188 residues long: Elongation factor P (188 aa).

The residue at position 34 (lysine 34) is an N6-(3,6-diaminohexanoyl)-5-hydroxylysine.

It belongs to the elongation factor P family. Post-translationally, may be beta-lysylated on the epsilon-amino group of Lys-34 by the combined action of EpmA and EpmB, and then hydroxylated on the C5 position of the same residue by EpmC (if this protein is present). Lysylation is critical for the stimulatory effect of EF-P on peptide-bond formation. The lysylation moiety may extend toward the peptidyltransferase center and stabilize the terminal 3-CCA end of the tRNA. Hydroxylation of the C5 position on Lys-34 may allow additional potential stabilizing hydrogen-bond interactions with the P-tRNA.

It localises to the cytoplasm. Its pathway is protein biosynthesis; polypeptide chain elongation. In terms of biological role, involved in peptide bond synthesis. Alleviates ribosome stalling that occurs when 3 or more consecutive Pro residues or the sequence PPG is present in a protein, possibly by augmenting the peptidyl transferase activity of the ribosome. Modification of Lys-34 is required for alleviation. The sequence is that of Elongation factor P from Xanthomonas oryzae pv. oryzae (strain MAFF 311018).